A 103-amino-acid polypeptide reads, in one-letter code: Stefin-2 (103 aa).

The Secondary area of contact motif lies at 52-56; the sequence is QVVQG.

This sequence belongs to the cystatin family.

It is found in the cytoplasm. This is an intracellular thiol proteinase inhibitor. This chain is Stefin-2 (Stfa2), found in Mus musculus (Mouse).